A 1738-amino-acid chain; its full sequence is Interaptin (1738 aa).

Residues Met1–Tyr248 are actin-binding. Residues Met1 to Pro1705 lie on the Cytoplasmic side of the membrane. 2 consecutive Calponin-homology (CH) domains span residues Ile22 to Gln128 and Thr146 to Gln249. 3 disordered regions span residues Ser285 to Ser350, Ile1068 to Asp1090, and Leu1589 to Ile1627. Over residues Gln292–Asn301 the composition is skewed to low complexity. Polar residues predominate over residues Leu302–Lys316. Composition is skewed to low complexity over residues Ser317 to Thr344, Ile1068 to Leu1086, and Leu1589 to Pro1617. The stretch at Glu373–Gln1598 forms a coiled coil. A helical; Anchor for type IV membrane protein transmembrane segment spans residues Ile1706 to Phe1726.

This sequence belongs to the alpha-actinin family.

It is found in the nucleus membrane. Its subcellular location is the endoplasmic reticulum membrane. The protein resides in the golgi apparatus. It localises to the golgi stack membrane. The protein localises to the cytoplasm. It is found in the cytoskeleton. Its subcellular location is the microtubule organizing center. The protein resides in the centrosome. In terms of biological role, may function as linker between cellular membranes and the actin cytoskeleton. Required for normal development of fruiting bodies. This chain is Interaptin (abpD), found in Dictyostelium discoideum (Social amoeba).